Consider the following 266-residue polypeptide: 3-methyl-2-oxobutanoate hydroxymethyltransferase (266 aa).

Positions 45 and 84 each coordinate Mg(2+). Residues 45–46, Asp84, and Lys112 contribute to the 3-methyl-2-oxobutanoate site; that span reads DS. Glu114 serves as a coordination point for Mg(2+). The Proton acceptor role is filled by Glu181.

This sequence belongs to the PanB family. As to quaternary structure, homodecamer; pentamer of dimers. It depends on Mg(2+) as a cofactor.

The protein localises to the cytoplasm. The catalysed reaction is 3-methyl-2-oxobutanoate + (6R)-5,10-methylene-5,6,7,8-tetrahydrofolate + H2O = 2-dehydropantoate + (6S)-5,6,7,8-tetrahydrofolate. The protein operates within cofactor biosynthesis; (R)-pantothenate biosynthesis; (R)-pantoate from 3-methyl-2-oxobutanoate: step 1/2. In terms of biological role, catalyzes the reversible reaction in which hydroxymethyl group from 5,10-methylenetetrahydrofolate is transferred onto alpha-ketoisovalerate to form ketopantoate. In Pseudomonas syringae pv. syringae (strain B728a), this protein is 3-methyl-2-oxobutanoate hydroxymethyltransferase.